The chain runs to 157 residues: NudC domain-containing protein 2 (157 aa).

S2 bears the N-acetylserine mark. The region spanning 14 to 104 is the CS domain; the sequence is CGTPWGQWYQ…DAANCWTSLL (91 aa). Residues 134 to 157 are disordered; sequence FDFSGAEISGNYTKGGPDFSNLEK. S142 is modified (phosphoserine). Y145 carries the phosphotyrosine modification.

In terms of assembly, interacts with LIS1.

The protein localises to the chromosome. The protein resides in the centromere. It is found in the kinetochore. It localises to the cytoplasm. Its subcellular location is the cytoskeleton. The protein localises to the microtubule organizing center. The protein resides in the centrosome. It is found in the spindle pole. Functionally, may regulate the LIS1/dynein pathway by stabilizing LIS1 with Hsp90 chaperone. The sequence is that of NudC domain-containing protein 2 (Nudcd2) from Mus musculus (Mouse).